Here is a 157-residue protein sequence, read N- to C-terminus: Endoribonuclease YbeY (157 aa).

3 residues coordinate Zn(2+): His-114, His-118, and His-124.

Belongs to the endoribonuclease YbeY family. Zn(2+) serves as cofactor.

The protein resides in the cytoplasm. Single strand-specific metallo-endoribonuclease involved in late-stage 70S ribosome quality control and in maturation of the 3' terminus of the 16S rRNA. The chain is Endoribonuclease YbeY from Edwardsiella ictaluri (strain 93-146).